The chain runs to 431 residues: Dihydroorotase (431 aa).

Zn(2+)-binding residues include His-59 and His-61. Residues 61-63 (HLR) and Asn-93 each bind substrate. The Zn(2+) site is built by Asp-151, His-178, His-231, and Asp-304. Residue Asp-304 is part of the active site. Substrate-binding positions include His-308 and 322–323 (FG).

This sequence belongs to the metallo-dependent hydrolases superfamily. DHOase family. Class I DHOase subfamily. Zn(2+) serves as cofactor.

It carries out the reaction (S)-dihydroorotate + H2O = N-carbamoyl-L-aspartate + H(+). Its pathway is pyrimidine metabolism; UMP biosynthesis via de novo pathway; (S)-dihydroorotate from bicarbonate: step 3/3. Its function is as follows. Catalyzes the reversible cyclization of carbamoyl aspartate to dihydroorotate. The polypeptide is Dihydroorotase (Thermoanaerobacter sp. (strain X514)).